The chain runs to 234 residues: UPF0441 protein plu3956 (234 aa).

Disordered stretches follow at residues 105-129 (QAGL…QQSG) and 149-234 (SAPS…SVGG). A compositionally biased stretch (low complexity) spans 110-127 (TTTSSTSTNGEAQAQQQQ). Residues 150 to 175 (APSQPLFSSKSATSPANGQFVDSTGK) are compositionally biased toward polar residues. 2 stretches are compositionally biased toward low complexity: residues 188–205 (TVPK…TTIT) and 216–234 (QSTM…SVGG).

This sequence belongs to the UPF0441 family.

This is UPF0441 protein plu3956 from Photorhabdus laumondii subsp. laumondii (strain DSM 15139 / CIP 105565 / TT01) (Photorhabdus luminescens subsp. laumondii).